We begin with the raw amino-acid sequence, 375 residues long: MKKVLVVFGTRPEAIKMAPLVKALQADASLQCGVCVTAQHREMLDQVLRLFDIRPDYDLNVMKPGQDLYELTSNILTGVKSVLESFEPDLVLVHGDTSTTLATTLAAYYKQVPVGHIEAGLRTGNLYSPWPEEVNRKVTGSLAALHFAPTERSRRNLLNEGVPADAVVVTGNTVIDALLSVRQRLQTDTALCRNTASLIPYNIGERRIVLVTGHRRESFGDGFERICSTLTSIARAHPDVDIVYPVHLNPNVREPVGRLLKGIANIHLIEPLDYLPFVYLMDKAHIILTDSGGIQEEAPSLGKPVLVMRDTTERPEAVEAGTVRLVGTSVDALVDSATALLNDDSAYEAMSRAHNPYGDGAASARITRAIQAYFA.

It belongs to the UDP-N-acetylglucosamine 2-epimerase family.

The protein resides in the cytoplasm. The enzyme catalyses UDP-N-acetyl-alpha-D-glucosamine = UDP-N-acetyl-alpha-D-mannosamine. It participates in glycan metabolism; exopolysaccharide EPS I biosynthesis. Functionally, may be involved in synthesis of N-acetyltrideoxygalactose, a component of exopolysaccharide EPS I which functions as a virulence factor. This chain is Probable UDP-N-acetylglucosamine 2-epimerase (epsC), found in Ralstonia solanacearum (Pseudomonas solanacearum).